The following is a 330-amino-acid chain: Free fatty acid receptor 2 (330 aa).

Over 1–8 (MTPDWHSS) the chain is Extracellular. Residues 9-29 (LILTAYILIFLTGLPANLLAL) form a helical membrane-spanning segment. The Cytoplasmic segment spans residues 30 to 43 (RAFVSRVRQPQPAP). Residues 44 to 64 (VHILLLNLTLADLLLLLLLPF) traverse the membrane as a helical segment. Residues 65–79 (RIVEAASNFRWYLPK) lie on the Extracellular side of the membrane. Residues 80–100 (IVCALTGFGFYSSIYCSTWLL) traverse the membrane as a helical segment. At 101 to 126 (AGISIERYLGVAFPVQYKLSRRPLYG) the chain is on the cytoplasmic side. A helical membrane pass occupies residues 127 to 147 (VIAALVAWIMSFGHCTIVIIV). The Extracellular portion of the chain corresponds to 148 to 184 (QYLNSTEQVGTENQITCYENFTQAQLDVVLPVRLELC). N-linked (GlcNAc...) asparagine glycosylation is found at N151 and N167. The helical transmembrane segment at 185–205 (LVLFFVPMTVTIFCYWRFVWI) threads the bilayer. Residues 206–219 (MLTQPHVGAQRRRR) are Cytoplasmic-facing. The chain crosses the membrane as a helical span at residues 220–240 (AVGLAVVTLLNFLVCFGPYNM). At 241 to 255 (SHLVGFHLRQSPSWR) the chain is on the extracellular side. Residues 256-276 (VEAVVFSSLNASLDPLLFYFS) traverse the membrane as a helical segment. At 277-330 (SSVVRRAFGKGLLLLRNPGSSMLGRGAEETVEGTKTDRGGSQTEGAQSSDFVTE) the chain is on the cytoplasmic side. The interval 300–330 (GRGAEETVEGTKTDRGGSQTEGAQSSDFVTE) is disordered. Over residues 302-314 (GAEETVEGTKTDR) the composition is skewed to basic and acidic residues. A compositionally biased stretch (polar residues) spans 315–330 (GGSQTEGAQSSDFVTE).

It belongs to the G-protein coupled receptor 1 family. As to quaternary structure, interacts with FCN1 (via Fibrinogen C-terminal domain). As to expression, detected in whole wall and separated mucosa in the distal ileum and colon. Expressed by enteroendocrine cells expressing peptide YY (PYY) (at protein level).

It localises to the cell membrane. Its function is as follows. G protein-coupled receptor that is activated by a major product of dietary fiber digestion, the short chain fatty acids (SCFAs), and that plays a role in the regulation of whole-body energy homeostasis and in intestinal immunity. In omnivorous mammals, the short chain fatty acids acetate, propionate and butyrate are produced primarily by the gut microbiome that metabolizes dietary fibers. SCFAs serve as a source of energy but also act as signaling molecules. That G protein-coupled receptor is probably coupled to the pertussis toxin-sensitive, G(i/o)-alpha family of G proteins but also to the Gq family. Its activation results in the formation of inositol 1,4,5-trisphosphate, the mobilization of intracellular calcium, the phosphorylation of the MAPK3/ERK1 and MAPK1/ERK2 kinases and the inhibition of intracellular cAMP accumulation. May play a role in glucose homeostasis by regulating the secretion of GLP-1, in response to short-chain fatty acids accumulating in the intestine. May also regulate the production of LEP/Leptin, a hormone acting on the central nervous system to inhibit food intake. Finally, may also regulate whole-body energy homeostasis through adipogenesis regulating both differentiation and lipid storage of adipocytes. In parallel to its role in energy homeostasis, may also mediate the activation of the inflammatory and immune responses by SCFA in the intestine, regulating the rapid production of chemokines and cytokines. May also play a role in the resolution of the inflammatory response and control chemotaxis in neutrophils. In addition to SCFAs, may also be activated by the extracellular lectin FCN1 in a process leading to activation of monocytes and inducing the secretion of interleukin-8/IL-8 in response to the presence of microbes. This is Free fatty acid receptor 2 (Ffar2) from Rattus norvegicus (Rat).